A 624-amino-acid chain; its full sequence is MDTQPIRLPSVAGATRSAGYPTRPPLRRFLTDCHEEFRGDSSGELADYIPELKRANPDHFGIALVTIDGHVYEVGDSAVPFTIQSVSKAFVFALALETVGEERVSATIGVEPSGEAFNSIRLTNDNRPFNPMVNAGAIACSGLIYEVDGKGAFERVRSKLSEFAGRELGVDEAVHASETATGNRNRAIAWLLRNYAVLPDDVDAVLDVYFRQCAILVTARDLAVMAATLANRGINPVTGAQVITPHIVARTLSVMTSSGMYDYAGEWTYRVGIPAKSGVGGGIVAALPSQLGLGTFSPLLDNHFNSVRGLKVCEALSARFDLHMLNRNADVRTSVMADYDVYGISSRRSRQPHEQQILDERHSDIRIVELVGALNFGTIDYVTRRLTSEPPNAPLLIIDFRRVPDITAAGAELLGETLTALGNANVTTILSGLEEASAVWAAIAARTGDPRRLRRFALLDDAIEWAEDQVIYRFGGFTDVKESVHLGEQALLAELDTDEIAAIVKLSTTRHYTAGQRVIAAGAPANSLFFLQSGMVSVKLRSGVRLASLGPGMEFGEMAILERTRSADVFADTPVACLELPLDSFADYRRLHPETALKIMRNLAAILARRLVAANAKVDLLSAY.

A disordered region spans residues 1 to 20; it reads MDTQPIRLPSVAGATRSAGY. The interval 43–325 is glutaminase; it reads GELADYIPEL…LSARFDLHML (283 aa). 7 residues coordinate substrate: Ser-85, Asn-134, Glu-178, Asn-185, Tyr-209, Tyr-261, and Val-279. The 112-residue stretch at 355–466 folds into the STAS domain; sequence QQILDERHSD…ALLDDAIEWA (112 aa). Position 491 to 608 (491 to 608) interacts with a nucleoside 3',5'-cyclic phosphate; sequence LLAELDTDEI…IMRNLAAILA (118 aa).

The protein belongs to the glutaminase family. As to quaternary structure, homotetramer.

The enzyme catalyses L-glutamine + H2O = L-glutamate + NH4(+). The chain is Glutaminase 2 (glsA2) from Bradyrhizobium diazoefficiens (strain JCM 10833 / BCRC 13528 / IAM 13628 / NBRC 14792 / USDA 110).